The sequence spans 365 residues: tRNA/tmRNA (uracil-C(5))-methyltransferase (365 aa).

S-adenosyl-L-methionine-binding residues include Gln189, Tyr217, Asn222, Glu238, and Asp298. Residue Cys323 is the Nucleophile of the active site. Glu357 functions as the Proton acceptor in the catalytic mechanism.

Belongs to the class I-like SAM-binding methyltransferase superfamily. RNA M5U methyltransferase family. TrmA subfamily.

It carries out the reaction uridine(54) in tRNA + S-adenosyl-L-methionine = 5-methyluridine(54) in tRNA + S-adenosyl-L-homocysteine + H(+). The enzyme catalyses uridine(341) in tmRNA + S-adenosyl-L-methionine = 5-methyluridine(341) in tmRNA + S-adenosyl-L-homocysteine + H(+). Functionally, dual-specificity methyltransferase that catalyzes the formation of 5-methyluridine at position 54 (m5U54) in all tRNAs, and that of position 341 (m5U341) in tmRNA (transfer-mRNA). The protein is tRNA/tmRNA (uracil-C(5))-methyltransferase of Shewanella frigidimarina (strain NCIMB 400).